Here is a 469-residue protein sequence, read N- to C-terminus: 3-isopropylmalate dehydratase large subunit 2 (469 aa).

Residues C347, C408, and C411 each coordinate [4Fe-4S] cluster.

The protein belongs to the aconitase/IPM isomerase family. LeuC type 1 subfamily. In terms of assembly, heterodimer of LeuC and LeuD. [4Fe-4S] cluster is required as a cofactor.

The enzyme catalyses (2R,3S)-3-isopropylmalate = (2S)-2-isopropylmalate. Its pathway is amino-acid biosynthesis; L-leucine biosynthesis; L-leucine from 3-methyl-2-oxobutanoate: step 2/4. Functionally, catalyzes the isomerization between 2-isopropylmalate and 3-isopropylmalate, via the formation of 2-isopropylmaleate. The protein is 3-isopropylmalate dehydratase large subunit 2 of Mannheimia succiniciproducens (strain KCTC 0769BP / MBEL55E).